Reading from the N-terminus, the 259-residue chain is Methanethiol S-methyltransferase 2 (259 aa).

5 helical membrane-spanning segments follow: residues 5–25 (LAIL…FLYA), 46–66 (LGEA…QHSV), 88–108 (TYVL…RPIP), 115–135 (SGIA…IAFA), and 182–202 (FLLA…FALA).

It belongs to the nurim family.

The protein localises to the membrane. The catalysed reaction is methanethiol + S-adenosyl-L-methionine = dimethyl sulfide + S-adenosyl-L-homocysteine + H(+). In terms of biological role, catalyzes the methylation of methanethiol (MeSH) to yield dimethylsulphide (DMS). This Bradyrhizobium diazoefficiens (strain JCM 10833 / BCRC 13528 / IAM 13628 / NBRC 14792 / USDA 110) protein is Methanethiol S-methyltransferase 2.